Consider the following 297-residue polypeptide: Urease accessory protein UreD (297 aa).

It belongs to the UreD family. In terms of assembly, ureD, UreF and UreG form a complex that acts as a GTP-hydrolysis-dependent molecular chaperone, activating the urease apoprotein by helping to assemble the nickel containing metallocenter of UreC. The UreE protein probably delivers the nickel.

It localises to the cytoplasm. Functionally, required for maturation of urease via the functional incorporation of the urease nickel metallocenter. This is Urease accessory protein UreD from Prochlorococcus marinus subsp. pastoris (strain CCMP1986 / NIES-2087 / MED4).